The primary structure comprises 296 residues: Mycothiol acetyltransferase (296 aa).

2 N-acetyltransferase domains span residues 1 to 148 (MTEW…IRVD) and 151 to 296 (VTVR…YGRA). E34 contributes to the 1D-myo-inositol 2-(L-cysteinylamino)-2-deoxy-alpha-D-glucopyranoside binding site. Acetyl-CoA-binding positions include 79–81 (LVV) and 87–92 (RRGIGS). 3 residues coordinate 1D-myo-inositol 2-(L-cysteinylamino)-2-deoxy-alpha-D-glucopyranoside: E178, K219, and E229. Acetyl-CoA contacts are provided by residues 233-235 (VGV) and 240-246 (QGRGLGH). A 1D-myo-inositol 2-(L-cysteinylamino)-2-deoxy-alpha-D-glucopyranoside-binding site is contributed by Y267. 272–277 (NQAALR) contributes to the acetyl-CoA binding site.

The protein belongs to the acetyltransferase family. MshD subfamily. Monomer.

It catalyses the reaction 1D-myo-inositol 2-(L-cysteinylamino)-2-deoxy-alpha-D-glucopyranoside + acetyl-CoA = mycothiol + CoA + H(+). Catalyzes the transfer of acetyl from acetyl-CoA to desacetylmycothiol (Cys-GlcN-Ins) to form mycothiol. The polypeptide is Mycothiol acetyltransferase (Mycobacteroides abscessus (strain ATCC 19977 / DSM 44196 / CCUG 20993 / CIP 104536 / JCM 13569 / NCTC 13031 / TMC 1543 / L948) (Mycobacterium abscessus)).